The primary structure comprises 696 residues: Glycine--tRNA ligase beta subunit (696 aa).

It belongs to the class-II aminoacyl-tRNA synthetase family. As to quaternary structure, tetramer of two alpha and two beta subunits.

The protein resides in the cytoplasm. The enzyme catalyses tRNA(Gly) + glycine + ATP = glycyl-tRNA(Gly) + AMP + diphosphate. The sequence is that of Glycine--tRNA ligase beta subunit from Oleidesulfovibrio alaskensis (strain ATCC BAA-1058 / DSM 17464 / G20) (Desulfovibrio alaskensis).